Consider the following 401-residue polypeptide: MARPDLHERISSLRKLRVAQERVRVRRQVGRRDGVRLEIDGRWLTGFCSNDYLGLSQQFEVVAALQDAAARDGAGATASHLICGHHTAHETLEREIAEWLGYPSALLFGSGFIANLAVQQALLSEEDDVCVQDRLNHASLLDATRLAGCRLRRYPHLDVEGAMRQLKGAPEGAAMLATDGVFSMDGDVAPLRALSLVARMQQALFYVDDAHGVGVLGPQGRGCVADAGLGVAEVPLQLVTLGKALGGYGAVVVGEEALVRHLAETARPYIYTTALPPAQVAATLAAVRLARRDDWRRARLVELIGAFRDGARKHGFELMASDTPIQPLLCGEEATVMAMSAALEHAGFMVGAIRPPTVPEGKARLRVTLSALHTQQQVQALIEAIVQARDVVSRQPLRASA.

Arginine 24 is a substrate binding site. Position 111–112 (111–112 (GF)) interacts with pyridoxal 5'-phosphate. Substrate is bound at residue histidine 137. The pyridoxal 5'-phosphate site is built by serine 183, histidine 211, and threonine 240. N6-(pyridoxal phosphate)lysine is present on lysine 243. Threonine 357 lines the substrate pocket.

This sequence belongs to the class-II pyridoxal-phosphate-dependent aminotransferase family. BioF subfamily. In terms of assembly, homodimer. Pyridoxal 5'-phosphate is required as a cofactor.

The catalysed reaction is 6-carboxyhexanoyl-[ACP] + L-alanine + H(+) = (8S)-8-amino-7-oxononanoate + holo-[ACP] + CO2. The protein operates within cofactor biosynthesis; biotin biosynthesis. In terms of biological role, catalyzes the decarboxylative condensation of pimeloyl-[acyl-carrier protein] and L-alanine to produce 8-amino-7-oxononanoate (AON), [acyl-carrier protein], and carbon dioxide. In Xanthomonas axonopodis pv. citri (strain 306), this protein is 8-amino-7-oxononanoate synthase.